The primary structure comprises 445 residues: Glucose-6-phosphate isomerase (445 aa).

E287 functions as the Proton donor in the catalytic mechanism. Catalysis depends on residues H308 and K422.

This sequence belongs to the GPI family.

It localises to the cytoplasm. It carries out the reaction alpha-D-glucose 6-phosphate = beta-D-fructose 6-phosphate. It participates in carbohydrate biosynthesis; gluconeogenesis. Its pathway is carbohydrate degradation; glycolysis; D-glyceraldehyde 3-phosphate and glycerone phosphate from D-glucose: step 2/4. Its function is as follows. Catalyzes the reversible isomerization of glucose-6-phosphate to fructose-6-phosphate. The protein is Glucose-6-phosphate isomerase of Bacteroides thetaiotaomicron (strain ATCC 29148 / DSM 2079 / JCM 5827 / CCUG 10774 / NCTC 10582 / VPI-5482 / E50).